The sequence spans 274 residues: 4-hydroxy-3-methylbut-2-enyl diphosphate reductase (274 aa).

A [4Fe-4S] cluster-binding site is contributed by Cys-12. The (2E)-4-hydroxy-3-methylbut-2-enyl diphosphate site is built by His-36 and His-70. Dimethylallyl diphosphate contacts are provided by His-36 and His-70. Isopentenyl diphosphate is bound by residues His-36 and His-70. Cys-92 is a [4Fe-4S] cluster binding site. Position 120 (His-120) interacts with (2E)-4-hydroxy-3-methylbut-2-enyl diphosphate. Position 120 (His-120) interacts with dimethylallyl diphosphate. His-120 provides a ligand contact to isopentenyl diphosphate. Residue Glu-122 is the Proton donor of the active site. A (2E)-4-hydroxy-3-methylbut-2-enyl diphosphate-binding site is contributed by Thr-158. A [4Fe-4S] cluster-binding site is contributed by Cys-186. Residues Ser-214, Ser-215, Asn-216, and Ser-258 each coordinate (2E)-4-hydroxy-3-methylbut-2-enyl diphosphate. Residues Ser-214, Ser-215, Asn-216, and Ser-258 each contribute to the dimethylallyl diphosphate site. Isopentenyl diphosphate-binding residues include Ser-214, Ser-215, Asn-216, and Ser-258.

This sequence belongs to the IspH family. [4Fe-4S] cluster is required as a cofactor.

It carries out the reaction isopentenyl diphosphate + 2 oxidized [2Fe-2S]-[ferredoxin] + H2O = (2E)-4-hydroxy-3-methylbut-2-enyl diphosphate + 2 reduced [2Fe-2S]-[ferredoxin] + 2 H(+). The enzyme catalyses dimethylallyl diphosphate + 2 oxidized [2Fe-2S]-[ferredoxin] + H2O = (2E)-4-hydroxy-3-methylbut-2-enyl diphosphate + 2 reduced [2Fe-2S]-[ferredoxin] + 2 H(+). It functions in the pathway isoprenoid biosynthesis; dimethylallyl diphosphate biosynthesis; dimethylallyl diphosphate from (2E)-4-hydroxy-3-methylbutenyl diphosphate: step 1/1. It participates in isoprenoid biosynthesis; isopentenyl diphosphate biosynthesis via DXP pathway; isopentenyl diphosphate from 1-deoxy-D-xylulose 5-phosphate: step 6/6. Functionally, catalyzes the conversion of 1-hydroxy-2-methyl-2-(E)-butenyl 4-diphosphate (HMBPP) into a mixture of isopentenyl diphosphate (IPP) and dimethylallyl diphosphate (DMAPP). Acts in the terminal step of the DOXP/MEP pathway for isoprenoid precursor biosynthesis. The sequence is that of 4-hydroxy-3-methylbut-2-enyl diphosphate reductase from Campylobacter concisus (strain 13826).